The sequence spans 292 residues: Poly(U)-specific endoribonuclease-A (292 aa).

Residues 8 to 285 form the EndoU domain; that stretch reads LNHELSKLFN…IGTAYPVLLS (278 aa). Catalysis depends on residues His162, His178, and Lys224.

It belongs to the ENDOU family. As to quaternary structure, monomer. Requires Mn(2+) as cofactor.

It is found in the nucleus. It carries out the reaction uridylyl-uridylyl-ribonucleotide-RNA = a 3'-end uridylyl-2',3'-cyclophospho-uridine-RNA + a 5'-end dephospho-ribonucleoside-RNA. Functionally, poly(U)-specific endoribonuclease involved in the processing of intron-encoded box C/D snoRNAs, such as U16 and U86. Releases products that have 2',3'-cyclic phosphate termini at the 3'-end. This is Poly(U)-specific endoribonuclease-A (endou-a) from Xenopus laevis (African clawed frog).